A 136-amino-acid polypeptide reads, in one-letter code: Keratin-associated protein 4-2 (136 aa).

A run of 20 repeats spans residues 5–9 (CCGSV), 20–24 (CCRPS), 25–29 (CCQTT), 30–34 (CCRTT), 35–39 (CCRPS), 40–44 (CCVSS), 45–49 (CCRPQ), 50–54 (CCQSV), 55–59 (CCQPT), 60–64 (CCSPS), 65–69 (CCQTT), 70–74 (CCRTT), 75–79 (CCRPS), 80–84 (CCVSS), 90–94 (CCQSV), 95–99 (YCQPT), 100–104 (CCRPS), 110–114 (CCRTT), 120–124 (CCVST), and 125–129 (CCRPT). The interval 5–129 (CCGSVCSDQG…CCVSTCCRPT (125 aa)) is 20 X 5 AA repeats OF C-C-[GRQVS]-[SPT]-[VSTQ].

Belongs to the KRTAP type 4 family. In terms of assembly, interacts with hair keratins.

In terms of biological role, in the hair cortex, hair keratin intermediate filaments are embedded in an interfilamentous matrix, consisting of hair keratin-associated proteins (KRTAP), which are essential for the formation of a rigid and resistant hair shaft through their extensive disulfide bond cross-linking with abundant cysteine residues of hair keratins. The matrix proteins include the high-sulfur and high-glycine-tyrosine keratins. The chain is Keratin-associated protein 4-2 (KRTAP4-2) from Homo sapiens (Human).